The primary structure comprises 267 residues: GTP cyclohydrolase FolE2 (267 aa).

The protein belongs to the GTP cyclohydrolase IV family.

It catalyses the reaction GTP + H2O = 7,8-dihydroneopterin 3'-triphosphate + formate + H(+). It functions in the pathway cofactor biosynthesis; 7,8-dihydroneopterin triphosphate biosynthesis; 7,8-dihydroneopterin triphosphate from GTP: step 1/1. Its function is as follows. Converts GTP to 7,8-dihydroneopterin triphosphate. This chain is GTP cyclohydrolase FolE2, found in Nitrosomonas eutropha (strain DSM 101675 / C91 / Nm57).